Consider the following 248-residue polypeptide: MSKLEGKVAVVTGASKGIGAAIAKALAKDGAAVVVNYASSKAGADAVVEAITAAGGKAIAVQADVSQAVQARGLVEAAVQQFGRLDVLVNNSGVYEFAAIEEVTEEHYRRIFDVNVLGVLLATQAASKHLGEGGSIINISSVVTDVLMPTSAVYSGTKGALNAISGVLANELAPRKIRVNVVSPGYVVTEGTHTAGIAGSEMEAGLVAQTPLGRSGQPDDIAGVVAFLASDDARWVTGEVINASGGVR.

Ser-141 contacts substrate. Catalysis depends on Tyr-154, which acts as the Proton acceptor.

Belongs to the short-chain dehydrogenases/reductases (SDR) family.

This is an uncharacterized protein from Methylorubrum extorquens (strain ATCC 14718 / DSM 1338 / JCM 2805 / NCIMB 9133 / AM1) (Methylobacterium extorquens).